A 580-amino-acid polypeptide reads, in one-letter code: Frizzled-10-B (580 aa).

An N-terminal signal peptide occupies residues 1-20 (MEPRVVTALLLSLAAALCSG). At 21–224 (ISSINPDRSG…DVYWSKNDKK (204 aa)) the chain is on the extracellular side. Residues 29–150 (SGEGRCQAIE…NDPNYLCMEA (122 aa)) form the FZ domain. Cystine bridges form between C34–C95, C42–C88, C79–C117, C106–C147, and C110–C134. N48 carries an N-linked (GlcNAc...) asparagine glycan. An N-linked (GlcNAc...) asparagine glycan is attached at N153. The segment at 173-194 (RPNSGHEMYPKDPKGRSSCENS) is disordered. Basic and acidic residues predominate over residues 180–189 (MYPKDPKGRS). The helical transmembrane segment at 225 to 245 (FAFIWIAIWSLLCFFSSAFTV) threads the bilayer. Topologically, residues 246–261 (LTFLVDPLRFKYPERP) are cytoplasmic. Residues 262-282 (IIFLSMCYCVYSVGYIIRLFA) form a helical membrane-spanning segment. Topologically, residues 283–309 (GADSIACDRDSGQLYVIQEGLESTGCT) are extracellular. Residues 310 to 330 (IVFLILYYFGMASSLWWVILT) traverse the membrane as a helical segment. At 331 to 350 (LTWFLAAGKKWGHEAIEANS) the chain is on the cytoplasmic side. A helical transmembrane segment spans residues 351–371 (SYFHLAAWAIPAVKTIMILVM). Topologically, residues 372 to 392 (RRVAGDELTGVCYVGSMDVNA) are extracellular. A helical membrane pass occupies residues 393–413 (LTGFVLIPLACYLIIGTSFIL). Over 414 to 442 (SGFVALFHIRRVMKTGGENTDKLEKLMVR) the chain is Cytoplasmic. A helical membrane pass occupies residues 443–463 (IGVFSVLYTVPATCVIACYFY). The Extracellular segment spans residues 464–501 (ERLNMDFWKILATQDKCKMDSQTKTLDCTMTSSIPAVE). A helical transmembrane segment spans residues 502–522 (IFMVKIFMLLVVGITSGMWIW). The Cytoplasmic portion of the chain corresponds to 523–580 (TSKTVQSWQNVFSKSLKKRNRNKPASVITSAGIYKKPQQPPKIHHGKYESALRSPTCV). The short motif at 525-530 (KTVQSW) is the Lys-Thr-X-X-X-Trp motif, mediates interaction with the PDZ domain of Dvl family members element. The interval 558-580 (KPQQPPKIHHGKYESALRSPTCV) is disordered. Residues 578–580 (TCV) carry the PDZ-binding motif.

It belongs to the G-protein coupled receptor Fz/Smo family. In terms of tissue distribution, expressed in liver, lung, brain, testis, heart and ovary.

Its subcellular location is the cell membrane. Its function is as follows. Receptor for Wnt proteins. Most of frizzled receptors are coupled to the beta-catenin canonical signaling pathway, which leads to the activation of disheveled proteins, inhibition of GSK-3 kinase, nuclear accumulation of beta-catenin and activation of Wnt target genes. A second signaling pathway involving PKC and calcium fluxes has been seen for some family members, but it is not yet clear if it represents a distinct pathway or if it can be integrated in the canonical pathway, as PKC seems to be required for Wnt-mediated inactivation of GSK-3 kinase. Both pathways seem to involve interactions with G-proteins. May be involved in transduction and intercellular transmission of polarity information during tissue morphogenesis and/or in differentiated tissues. Activated by Wnt8. Could have an antagonizing activity in the morphogenesis during development. The polypeptide is Frizzled-10-B (fzd10-b) (Xenopus laevis (African clawed frog)).